The following is a 67-amino-acid chain: Neurotoxin Os3 (67 aa).

In terms of domain architecture, LCN-type CS-alpha/beta spans 3–67 (RDGYIAQPHN…GVIVDGEKCH (65 aa)). Disulfide bonds link C13–C66, C17–C39, C24–C48, and C28–C50.

Belongs to the long (4 C-C) scorpion toxin superfamily. Sodium channel inhibitor family. Alpha subfamily. In terms of tissue distribution, expressed by the venom gland.

Its subcellular location is the secreted. Its function is as follows. Binds to sodium channels (Nav) and inhibits the inactivation of the activated channels, thereby blocking neuronal transmission. This is Neurotoxin Os3 from Orthochirus scrobiculosus (Central Asian scorpion).